We begin with the raw amino-acid sequence, 142 residues long: uncharacterized protein (142 aa).

As to quaternary structure, homodimer.

This is an uncharacterized protein from Bacillus subtilis (strain 168).